Reading from the N-terminus, the 267-residue chain is tRNA pseudouridine synthase A (267 aa).

The active-site Nucleophile is aspartate 55. Tyrosine 111 provides a ligand contact to substrate.

It belongs to the tRNA pseudouridine synthase TruA family.

The enzyme catalyses uridine(38/39/40) in tRNA = pseudouridine(38/39/40) in tRNA. Its function is as follows. Formation of pseudouridine at positions 38, 39 and 40 in the anticodon stem and loop of transfer RNAs. This chain is tRNA pseudouridine synthase A, found in Thermococcus kodakarensis (strain ATCC BAA-918 / JCM 12380 / KOD1) (Pyrococcus kodakaraensis (strain KOD1)).